The chain runs to 297 residues: Ribosomal RNA small subunit methyltransferase H (297 aa).

Residues 37-39 (GGH), E56, F87, D102, and H109 each bind S-adenosyl-L-methionine.

The protein belongs to the methyltransferase superfamily. RsmH family.

It is found in the cytoplasm. The catalysed reaction is cytidine(1402) in 16S rRNA + S-adenosyl-L-methionine = N(4)-methylcytidine(1402) in 16S rRNA + S-adenosyl-L-homocysteine + H(+). Specifically methylates the N4 position of cytidine in position 1402 (C1402) of 16S rRNA. This is Ribosomal RNA small subunit methyltransferase H from Borrelia recurrentis (strain A1).